Consider the following 160-residue polypeptide: Small ribosomal subunit protein uS7 (160 aa).

This sequence belongs to the universal ribosomal protein uS7 family. Part of the 30S ribosomal subunit. Contacts proteins S9 and S11.

One of the primary rRNA binding proteins, it binds directly to 16S rRNA where it nucleates assembly of the head domain of the 30S subunit. Is located at the subunit interface close to the decoding center, probably blocks exit of the E-site tRNA. In Ehrlichia chaffeensis (strain ATCC CRL-10679 / Arkansas), this protein is Small ribosomal subunit protein uS7.